Here is a 130-residue protein sequence, read N- to C-terminus: UPF0102 protein SCO5602 (130 aa).

It belongs to the UPF0102 family.

The polypeptide is UPF0102 protein SCO5602 (Streptomyces coelicolor (strain ATCC BAA-471 / A3(2) / M145)).